Here is a 71-residue protein sequence, read N- to C-terminus: Prokaryotic ubiquitin-like protein Pup (71 aa).

Residues 1-18 show a composition bias toward basic and acidic residues; the sequence is MPEKDTGGQHRATRRTEE. The tract at residues 1-36 is disordered; it reads MPEKDTGGQHRATRRTEEHDETIDEATATSDVQERR. The interval 27-65 is ARC ATPase binding; that stretch reads TATSDVQERREKLDADVDAILDEIDDVLEENAEEFVRSY. Residues 30–59 adopt a coiled-coil conformation; that stretch reads SDVQERREKLDADVDAILDEIDDVLEENAE. Glu-71 participates in a covalent cross-link: Isoglutamyl lysine isopeptide (Glu-Lys) (interchain with K-? in acceptor proteins).

The protein belongs to the prokaryotic ubiquitin-like protein family. Strongly interacts with the proteasome-associated ATPase ARC through a hydrophobic interface; the interacting region of Pup lies in its C-terminal half. There is one Pup binding site per ARC hexamer ring.

Its pathway is protein degradation; proteasomal Pup-dependent pathway. Functionally, protein modifier that is covalently attached to lysine residues of substrate proteins, thereby targeting them for proteasomal degradation. The tagging system is termed pupylation. This Acidothermus cellulolyticus (strain ATCC 43068 / DSM 8971 / 11B) protein is Prokaryotic ubiquitin-like protein Pup.